We begin with the raw amino-acid sequence, 557 residues long: Dihydroxy-acid dehydratase (557 aa).

C50 is a [2Fe-2S] cluster binding site. D82 lines the Mg(2+) pocket. C123 contacts [2Fe-2S] cluster. Residues D124 and K125 each contribute to the Mg(2+) site. K125 is subject to N6-carboxylysine. A [2Fe-2S] cluster-binding site is contributed by C195. E447 is a Mg(2+) binding site. S473 acts as the Proton acceptor in catalysis.

It belongs to the IlvD/Edd family. As to quaternary structure, homodimer. [2Fe-2S] cluster is required as a cofactor. It depends on Mg(2+) as a cofactor.

It carries out the reaction (2R)-2,3-dihydroxy-3-methylbutanoate = 3-methyl-2-oxobutanoate + H2O. The enzyme catalyses (2R,3R)-2,3-dihydroxy-3-methylpentanoate = (S)-3-methyl-2-oxopentanoate + H2O. It functions in the pathway amino-acid biosynthesis; L-isoleucine biosynthesis; L-isoleucine from 2-oxobutanoate: step 3/4. The protein operates within amino-acid biosynthesis; L-valine biosynthesis; L-valine from pyruvate: step 3/4. In terms of biological role, functions in the biosynthesis of branched-chain amino acids. Catalyzes the dehydration of (2R,3R)-2,3-dihydroxy-3-methylpentanoate (2,3-dihydroxy-3-methylvalerate) into 2-oxo-3-methylpentanoate (2-oxo-3-methylvalerate) and of (2R)-2,3-dihydroxy-3-methylbutanoate (2,3-dihydroxyisovalerate) into 2-oxo-3-methylbutanoate (2-oxoisovalerate), the penultimate precursor to L-isoleucine and L-valine, respectively. The protein is Dihydroxy-acid dehydratase of Nitrosospira multiformis (strain ATCC 25196 / NCIMB 11849 / C 71).